The primary structure comprises 162 residues: UPF0763 protein Sdel_0383 (162 aa).

Belongs to the UPF0763 family.

The polypeptide is UPF0763 protein Sdel_0383 (Sulfurospirillum deleyianum (strain ATCC 51133 / DSM 6946 / 5175)).